We begin with the raw amino-acid sequence, 299 residues long: Nicotinate-nucleotide pyrophosphorylase [carboxylating] (299 aa).

An important for hexamer formation region spans residues 8–12; the sequence is LLLPP. Residues R102, 138–139, 160–161, K171, E201, D222, 248–250, and G270 each bind quinolinate; these read RK, HR, and SGG.

It belongs to the NadC/ModD family. In terms of assembly, hexamer formed by 3 homodimers.

The enzyme catalyses nicotinate beta-D-ribonucleotide + CO2 + diphosphate = quinolinate + 5-phospho-alpha-D-ribose 1-diphosphate + 2 H(+). Its pathway is cofactor biosynthesis; NAD(+) biosynthesis; nicotinate D-ribonucleotide from quinolinate: step 1/1. Functionally, involved in the catabolism of quinolinic acid (QA). The sequence is that of Nicotinate-nucleotide pyrophosphorylase [carboxylating] from Sus scrofa (Pig).